Consider the following 99-residue polypeptide: Small integral membrane protein 9 (99 aa).

Positions 1 to 26 (MEPQKLLIIGFLLCSLTCLLLETVAS) are cleaved as a signal peptide. Topologically, residues 27–73 (SPLPLSALGIQEKTGSKPRSGGNHRSWLNNFRDYLWQLIKSALPPAA) are extracellular. Residues 74–94 (IVAFLLTSALMGILCCFTILV) form a helical membrane-spanning segment. Residues 95-99 (VDPVH) are Cytoplasmic-facing.

It localises to the cell membrane. The sequence is that of Small integral membrane protein 9 (SMIM9) from Homo sapiens (Human).